Reading from the N-terminus, the 79-residue chain is Dicentracin (79 aa).

The signal sequence occupies residues M1–A22. Position 44 is a glycine amide (G44). Positions A47–D79 are excised as a propeptide. The tract at residues Q48–Q67 is disordered.

Belongs to the pleurocidin family.

The protein localises to the secreted. The chain is Dicentracin from Dicentrarchus labrax (European seabass).